The sequence spans 235 residues: Proteasome subunit alpha type-2-A (235 aa).

Lysine 64 is covalently cross-linked (Glycyl lysine isopeptide (Lys-Gly) (interchain with G-Cter in ubiquitin)).

This sequence belongs to the peptidase T1A family. Component of the 20S core complex of the 26S proteasome. The 26S proteasome is composed of a core protease (CP), known as the 20S proteasome, capped at one or both ends by the 19S regulatory particle (RP/PA700). The 20S proteasome core is composed of 28 subunits that are arranged in four stacked rings, resulting in a barrel-shaped structure. The two end rings are each formed by seven alpha subunits, and the two central rings are each formed by seven beta subunits. The catalytic chamber with the active sites is on the inside of the barrel.

It is found in the cytoplasm. Its subcellular location is the nucleus. Functionally, the proteasome is a multicatalytic proteinase complex which is characterized by its ability to cleave peptides with Arg, Phe, Tyr, Leu, and Glu adjacent to the leaving group at neutral or slightly basic pH. The proteasome has an ATP-dependent proteolytic activity. The sequence is that of Proteasome subunit alpha type-2-A (PAB1) from Arabidopsis thaliana (Mouse-ear cress).